The following is a 72-amino-acid chain: UPF0270 protein YheU (72 aa).

Belongs to the UPF0270 family.

In Salmonella arizonae (strain ATCC BAA-731 / CDC346-86 / RSK2980), this protein is UPF0270 protein YheU.